A 173-amino-acid chain; its full sequence is Protein-export protein SecB (173 aa).

The protein belongs to the SecB family. In terms of assembly, homotetramer, a dimer of dimers. One homotetramer interacts with 1 SecA dimer.

The protein resides in the cytoplasm. Its function is as follows. One of the proteins required for the normal export of preproteins out of the cell cytoplasm. It is a molecular chaperone that binds to a subset of precursor proteins, maintaining them in a translocation-competent state. It also specifically binds to its receptor SecA. This Ralstonia nicotianae (strain ATCC BAA-1114 / GMI1000) (Ralstonia solanacearum) protein is Protein-export protein SecB.